An 86-amino-acid polypeptide reads, in one-letter code: Neurotoxin 8-related gene product 1/2/3 (86 aa).

The first 19 residues, 1–19, serve as a signal peptide directing secretion; it reads MNYLTMISLALLVMTGVES. Residues 22-84 form the LCN-type CS-alpha/beta domain; the sequence is RDAYIADNKN…VPIKVPGKCN (63 aa). 4 disulfide bridges follow: Cys32–Cys83, Cys36–Cys56, Cys42–Cys66, and Cys46–Cys68. The residue at position 84 (Asn84) is an Asparagine amide.

Belongs to the long (4 C-C) scorpion toxin superfamily. Sodium channel inhibitor family. Alpha subfamily. Expressed by the venom gland.

It is found in the secreted. Binds voltage-dependently at site-3 of sodium channels (Nav) and inhibits the inactivation of the activated channels, thereby blocking neuronal transmission. The chain is Neurotoxin 8-related gene product 1/2/3 (NTVIIIrgp1) from Androctonus mauritanicus mauritanicus (Scorpion).